Consider the following 101-residue polypeptide: Small ribosomal subunit protein uS14 (101 aa).

The disordered stretch occupies residues 36-72 (GTDESREAARAGIQRLPRDASPIRVRNRDGIDGRPRG). Residues 61 to 70 (RNRDGIDGRP) show a composition bias toward basic and acidic residues.

The protein belongs to the universal ribosomal protein uS14 family. As to quaternary structure, part of the 30S ribosomal subunit. Contacts proteins S3 and S10.

In terms of biological role, binds 16S rRNA, required for the assembly of 30S particles and may also be responsible for determining the conformation of the 16S rRNA at the A site. In Clavibacter michiganensis subsp. michiganensis (strain NCPPB 382), this protein is Small ribosomal subunit protein uS14.